The primary structure comprises 469 residues: Protein DETOXIFICATION 18 (469 aa).

The next 12 helical transmembrane spans lie at 40–60 (LPMIFTNLFYYCIPLTSVMFA), 73–93 (LANSWATVTGFAFMTGLSGAL), 121–141 (LVFTILITILWFFTESVFLLL), 152–172 (ALYMKYLAPGLLAYGFLQNIL), 183–203 (PLVLFSFLPLVINIGTTYALV), 206–226 (AGLGFIGAPIATSISLWIAFV), 252–274 (HVVLNLTLSIPSAAMVCLEYWAF), 293–313 (LVAICVNTESISYMLTCGLSA), 344–364 (VLALGVVIAILVGHDAWVGLF), 374–394 (FASLRFFLAASITLDSIQGVL), 406–426 (LATVINLGTFYLIGMPISVLC), and 438–458 (WIGLICGMFCQSASLLLMTIF).

Belongs to the multi antimicrobial extrusion (MATE) (TC 2.A.66.1) family.

It localises to the membrane. This chain is Protein DETOXIFICATION 18, found in Arabidopsis thaliana (Mouse-ear cress).